A 153-amino-acid polypeptide reads, in one-letter code: MTKVKAAPEESEAQAEGCSEERTYKELLVNLNPIAQPLASRRLTRKLYKCIKKAVKQKQIRRGVKEVQKFVNKGEKGIMVLAGDTLPIEVYCHLPVLCEDQNLPYVYIPSKTDLGAATGSKRPTCVIMVKPHEEYQETYDKCLEEVQALPTPL.

Lys-3 is covalently cross-linked (Glycyl lysine isopeptide (Lys-Gly) (interchain with G-Cter in SUMO2)). A Glycyl lysine isopeptide (Lys-Gly) (interchain with G-Cter in SUMO); alternate cross-link involves residue Lys-5. A Glycyl lysine isopeptide (Lys-Gly) (interchain with G-Cter in SUMO1); alternate cross-link involves residue Lys-5. Lys-5 participates in a covalent cross-link: Glycyl lysine isopeptide (Lys-Gly) (interchain with G-Cter in SUMO2); alternate. Phosphoserine is present on Ser-19.

This sequence belongs to the eukaryotic ribosomal protein eL8 family. Part of the H/ACA small nucleolar ribonucleoprotein (H/ACA snoRNP) complex, which contains NHP2/NOLA2, GAR1/NOLA1, NOP10/NOLA3, and DKC1/NOLA4, which is presumed to be the catalytic subunit. The complex contains a stable core formed by binding of one or two NOP10-DKC1 heterodimers to NHP2; GAR1 subsequently binds to this core via DKC1. The complex binds a box H/ACA small nucleolar RNA (snoRNA), which may target the specific site of modification within the RNA substrate. During assembly, the complex contains NAF1 instead of GAR1/NOLA1. The complex also interacts with TERC, which contains a 3'-terminal domain related to the box H/ACA snoRNAs. Specific interactions with snoRNAs or TERC are mediated by GAR1 and NHP2. Associates with NOLC1/NOPP140. H/ACA snoRNPs interact with the SMN complex, consisting of SMN1 or SMN2, GEMIN2/SIP1, DDX20/GEMIN3, and GEMIN4. This is mediated by interaction between GAR1 and SMN1 or SMN2. The SMN complex may be required for correct assembly of the H/ACA snoRNP complex. Component of the telomerase holoenzyme complex composed of one molecule of TERT, one molecule of WRAP53/TCAB1, two molecules of H/ACA ribonucleoprotein complex subunits DKC1, NOP10, NHP2 and GAR1, and a telomerase RNA template component (TERC). The telomerase holoenzyme complex is associated with TEP1, SMG6/EST1A and POT1.

The protein localises to the nucleus. It localises to the nucleolus. Its subcellular location is the cajal body. Required for ribosome biogenesis and telomere maintenance. Part of the H/ACA small nucleolar ribonucleoprotein (H/ACA snoRNP) complex, which catalyzes pseudouridylation of rRNA. This involves the isomerization of uridine such that the ribose is subsequently attached to C5, instead of the normal N1. Each rRNA can contain up to 100 pseudouridine ('psi') residues, which may serve to stabilize the conformation of rRNAs. May also be required for correct processing or intranuclear trafficking of TERC, the RNA component of the telomerase reverse transcriptase (TERT) holoenzyme. This chain is H/ACA ribonucleoprotein complex subunit 2 (Nhp2), found in Mus musculus (Mouse).